The primary structure comprises 295 residues: Inositol monophosphatase 1 (295 aa).

Positions 73, 92, 94, 95, and 231 each coordinate Mg(2+). A substrate-binding site is contributed by Glu73. Residues 94–97 and Asp231 each bind substrate; that span reads IDGT.

Belongs to the inositol monophosphatase superfamily. Mg(2+) serves as cofactor.

It localises to the cytoplasm. The protein localises to the nucleus. The enzyme catalyses a myo-inositol phosphate + H2O = myo-inositol + phosphate. The protein operates within polyol metabolism; myo-inositol biosynthesis; myo-inositol from D-glucose 6-phosphate: step 2/2. Its activity is regulated as follows. Inhibited by Li(+) and Na(+). Its function is as follows. Responsible for the provision of inositol required for synthesis of phosphatidylinositol and polyphosphoinositides. The chain is Inositol monophosphatase 1 (INM1) from Saccharomyces cerevisiae (strain ATCC 204508 / S288c) (Baker's yeast).